We begin with the raw amino-acid sequence, 134 residues long: Small ribosomal subunit protein bS6 (134 aa).

Positions 103–134 (AAPVKSAEEGTEEVAAEAATEAPAETTTTVEV) are disordered. Over residues 118–134 (AEAATEAPAETTTTVEV) the composition is skewed to low complexity.

The protein belongs to the bacterial ribosomal protein bS6 family.

Functionally, binds together with bS18 to 16S ribosomal RNA. This chain is Small ribosomal subunit protein bS6, found in Geobacter sp. (strain M21).